Here is a 206-residue protein sequence, read N- to C-terminus: FMN-dependent NADH:quinone oxidoreductase 2 (206 aa).

Residues S10, 16–18 (SYS), and 140–143 (SCGG) each bind FMN.

The protein belongs to the azoreductase type 1 family. Homodimer. The cofactor is FMN.

The enzyme catalyses 2 a quinone + NADH + H(+) = 2 a 1,4-benzosemiquinone + NAD(+). It catalyses the reaction N,N-dimethyl-1,4-phenylenediamine + anthranilate + 2 NAD(+) = 2-(4-dimethylaminophenyl)diazenylbenzoate + 2 NADH + 2 H(+). In terms of biological role, quinone reductase that provides resistance to thiol-specific stress caused by electrophilic quinones. Its function is as follows. Also exhibits azoreductase activity. Catalyzes the reductive cleavage of the azo bond in aromatic azo compounds to the corresponding amines. The chain is FMN-dependent NADH:quinone oxidoreductase 2 from Cupriavidus pinatubonensis (strain JMP 134 / LMG 1197) (Cupriavidus necator (strain JMP 134)).